The chain runs to 355 residues: MKIAVLPGDGIGPEIVAEAVKVLNALDEKFEMETAPVGGAGYEAEGHPLPENTLKLAKEADAILFGAVGDWKYDSLERALRPEQAILGLRKHLQLFANFRPAICYPELTGASSLKPELVAGLDILIVRELNGDIYFGQPRGVREAPDGLFKGAREGFDTMRYSEPEIRRIAHVAFQAAAKRGKKLCSVDKANVLETFQFWKDIVIDVSKEYPDVELSHMYVDNAAMQLVKAPKSFDVIVTGNMFGDILSDEAAMLTGSIGMLPSASLDANNKGLYEPSHGSAPDIAGKGVANPLATILSAAMMLRYSLNKAEQADRIENAVKKVLAQGYRTGDILTPGCKQVGTREMGEAVLAAL.

The substrate site is built by Arg90, Arg100, Arg128, and Asp222. Mg(2+) is bound by residues Asp222, Asp246, and Asp250. 280–292 (GSAPDIAGKGVAN) provides a ligand contact to NAD(+).

It belongs to the isocitrate and isopropylmalate dehydrogenases family. LeuB type 1 subfamily. Homodimer. It depends on Mg(2+) as a cofactor. Requires Mn(2+) as cofactor.

The protein resides in the cytoplasm. It catalyses the reaction (2R,3S)-3-isopropylmalate + NAD(+) = 4-methyl-2-oxopentanoate + CO2 + NADH. It functions in the pathway amino-acid biosynthesis; L-leucine biosynthesis; L-leucine from 3-methyl-2-oxobutanoate: step 3/4. Catalyzes the oxidation of 3-carboxy-2-hydroxy-4-methylpentanoate (3-isopropylmalate) to 3-carboxy-4-methyl-2-oxopentanoate. The product decarboxylates to 4-methyl-2 oxopentanoate. This Cupriavidus pinatubonensis (strain JMP 134 / LMG 1197) (Cupriavidus necator (strain JMP 134)) protein is 3-isopropylmalate dehydrogenase.